Consider the following 1014-residue polypeptide: Protein argonaute 2 (1014 aa).

A compositionally biased stretch (basic and acidic residues) spans 1–15; it reads MERGGYRGGRGDGRG. Residues 1–137 form a disordered region; it reads MERGGYRGGR…PSTSTTVVSE (137 aa). Gly residues-rich tracts occupy residues 18-29 and 49-58; these read GRGYGGGGGGGE and RGGGNRGQGR. Positions 83–104 are enriched in low complexity; sequence QFQQPRPQVAPQPSQAPASYAG. The span at 105–114 shows a compositional bias: gly residues; the sequence is SVGGVAGRGA. The span at 121-137 shows a compositional bias: low complexity; the sequence is VPSDSASPSTSTTVVSE. A PAZ domain is found at 369–482; sequence SVIEYLKLYF…VPMEFCDLVE (114 aa). Residues 666–965 form the Piwi domain; it reads LVLCAMSRKD…VAFRGRMYHE (300 aa). Interaction with guide RNA regions lie at residues 857–858, 900–908, and 937–959; these read KR, HHGGIGTSK, and FTRCTKPVSLVPPVYYADMVAFR.

This sequence belongs to the argonaute family. Ago subfamily. Interacts with NERD.

Involved in RNA-mediated post-transcriptional gene silencing (PTGS). Main component of the RNA-induced silencing complex (RISC) that binds to a short guide RNA such as microRNA (miRNA) or small interfering RNA (siRNA). RISC uses the mature miRNA or siRNA as a guide for slicer-directed cleavage of homologous mRNAs to repress gene expression. Associates mainly with siRNAs of 21 nucleotide in length and preferentially recruits small RNAs with a 5' terminal adenosine. Probably involved in antiviral RNA silencing. Associates with siRNA derived from cucumber mosaic virus (CMV). Targeted by turnip yellows virus (TuYV) protein P0 (via F-box-like domain) for probable proteasome degradation and thereby inactivating AGO2 function in RNA silencing. Required to direct NERD-dependent DNA methylation and silencing. This chain is Protein argonaute 2 (AGO2), found in Arabidopsis thaliana (Mouse-ear cress).